The sequence spans 325 residues: tRNA(Ile)-lysidine synthase (325 aa).

Position 35–40 (35–40) interacts with ATP; that stretch reads SGGQDS.

It belongs to the tRNA(Ile)-lysidine synthase family.

It is found in the cytoplasm. It carries out the reaction cytidine(34) in tRNA(Ile2) + L-lysine + ATP = lysidine(34) in tRNA(Ile2) + AMP + diphosphate + H(+). In terms of biological role, ligates lysine onto the cytidine present at position 34 of the AUA codon-specific tRNA(Ile) that contains the anticodon CAU, in an ATP-dependent manner. Cytidine is converted to lysidine, thus changing the amino acid specificity of the tRNA from methionine to isoleucine. The protein is tRNA(Ile)-lysidine synthase of Gloeobacter violaceus (strain ATCC 29082 / PCC 7421).